The primary structure comprises 1161 residues: Nardilysin (1161 aa).

The N-terminal stretch at 1–18 (MLRRVAVAAVCVTGRKLR) is a signal peptide. Disordered regions lie at residues 49–103 (MPGR…IIKS) and 130–218 (VEGK…KKTT). Phosphoserine occurs at positions 85, 91, and 93. Over residues 138-209 (TDEEEEEEEE…EENELEELEE (72 aa)) the composition is skewed to acidic residues. Position 244 (H244) interacts with Zn(2+). E247 functions as the Proton acceptor in the catalytic mechanism. Zn(2+)-binding residues include H248 and E325.

It belongs to the peptidase M16 family. As to quaternary structure, interacts with BACE1 and NRG1. It depends on Zn(2+) as a cofactor. As to expression, highly expressed in brain of early postnatal mice but expressed at a lower level in the brains of adult mice. Expression is high in cortical neurons, and lower in neurons in the striatum. Very low expression detected in the corpus callosum. Also expressed in the gray matter in spinal cord and dorsal root ganglia.

It is found in the mitochondrion. It localises to the cell projection. Its subcellular location is the dendrite. The catalysed reaction is Hydrolysis of polypeptides, preferably at -Xaa-|-Arg-Lys-, and less commonly at -Arg-|-Arg-Xaa-, in which Xaa is not Arg or Lys.. In terms of biological role, cleaves peptide substrates on the N-terminus of arginine residues in dibasic pairs. Is a critical activator of BACE1- and ADAM17-mediated pro-neuregulin ectodomain shedding, involved in the positive regulation of axonal maturation and myelination. Required for proper functioning of 2-oxoglutarate dehydrogenase (OGDH). In Mus musculus (Mouse), this protein is Nardilysin.